The following is a 173-amino-acid chain: Nanos homolog 3 (173 aa).

Residues 23–51 (KEGPETRLSPQPEPEPMLEPDQKRSLESS) form a disordered region. A Nanos-type zinc finger spans residues 57-111 (LCSFCKHNGESRAIYQSHVLKDEAGRVLCPILRDYVCPQCGATRERAHTRRFCPL). The Zn(2+) site is built by Cys-58, Cys-61, His-74, Cys-85, Cys-93, Cys-96, His-104, and Cys-109. 2 consecutive short sequence motifs (C2HC) follow at residues 58-85 (CSFC…RVLC) and 93-109 (CPQC…RRFC). Residues 123–173 (TTRNSAGKKLVRPDKAKTQDTGHRRGGGGGAGFRGAGKSEPSPSCSPSMST) are disordered. The span at 133 to 145 (VRPDKAKTQDTGH) shows a compositional bias: basic and acidic residues. Low complexity predominate over residues 161–173 (SEPSPSCSPSMST).

This sequence belongs to the nanos family. In terms of assembly, binds mRNA from germ cells. Interacts with PUM2. As to expression, ovary, testis and brain (at protein level). In the ovaries, expressed during multiple stages of oogenesis, including primordial, primary, secondary and antral follicles with the highest expression in the oocytes. In the testis, expressed in germ cells, type A spermatogonia (SA), primary spermatocytes (S1), round spermatids (S3) and elongated spermatids.

Its subcellular location is the nucleus. It is found in the cytoplasm. It localises to the stress granule. The protein localises to the P-body. Functionally, plays a role in the maintenance of the undifferentiated state of germ cells regulating the spermatogonia cell cycle and inducing a prolonged transit in G1 phase. Affects cell proliferation probably by repressing translation of specific mRNAs. Maintains the germ cell lineage by suppressing both Bax-dependent and -independent apoptotic pathways. Essential in the early stage embryo to protect the migrating primordial germ cells (PGCs) from apoptosis. This chain is Nanos homolog 3 (NANOS3), found in Homo sapiens (Human).